Here is a 537-residue protein sequence, read N- to C-terminus: Polyadenylate-binding protein 6 (537 aa).

4 consecutive RRM domains span residues 21-99 (GSLY…WSQR), 112-188 (ANLY…KFIN), 202-279 (TNVY…KALK), and 304-381 (SNLY…VAER). The segment at 503-537 (KATTSEENRKEERRLTLSGKLSPEVKVEESGKQLQ) is disordered. 2 stretches are compositionally biased toward basic and acidic residues: residues 506-517 (TSEENRKEERRL) and 525-537 (PEVKVEESGKQLQ).

The protein belongs to the polyadenylate-binding protein type-1 family. As to expression, expressed at low levels in leaves and young seedlings.

It is found in the cytoplasm. The protein localises to the nucleus. Its function is as follows. Binds the poly(A) tail of mRNA. Appears to be an important mediator of the multiple roles of the poly(A) tail in mRNA biogenesis, stability and translation. This is Polyadenylate-binding protein 6 (PAB6) from Arabidopsis thaliana (Mouse-ear cress).